A 144-amino-acid chain; its full sequence is Large ribosomal subunit protein uL15 (144 aa).

The disordered stretch occupies residues M1–R48.

Belongs to the universal ribosomal protein uL15 family. In terms of assembly, part of the 50S ribosomal subunit.

Binds to the 23S rRNA. The protein is Large ribosomal subunit protein uL15 of Chlamydia trachomatis serovar L2 (strain ATCC VR-902B / DSM 19102 / 434/Bu).